The primary structure comprises 213 residues: Putative manganese efflux pump MntP (213 aa).

6 helical membrane-spanning segments follow: residues 3-23 (ILSIVLTGFGLAMDAFAVSVA), 36-56 (ALKVALFFGGFQALMPLIGWG), 67-87 (AFDHWIAFILLSFIGGKMIFE), 130-150 (LAIATSIDALAVGVSFAFLGI), 152-172 (IVQTIIIIGIITFVLCFLGVI), and 187-207 (IVGGVILILIGINILLEHTGI).

The protein belongs to the MntP (TC 9.B.29) family.

The protein localises to the cell membrane. Functionally, probably functions as a manganese efflux pump. This is Putative manganese efflux pump MntP from Clostridium perfringens (strain 13 / Type A).